A 152-amino-acid polypeptide reads, in one-letter code: Interleukin-2 (152 aa).

Residues 1–20 form the signal peptide; it reads MYRMQLLSCIALTLALVANG. O-linked (GalNAc...) threonine glycosylation occurs at Thr23. An intrachain disulfide couples Cys78 to Cys126.

The protein belongs to the IL-2 family.

It is found in the secreted. Its function is as follows. Cytokine produced by activated CD4-positive helper T-cells and to a lesser extend activated CD8-positive T-cells and natural killer (NK) cells that plays pivotal roles in the immune response and tolerance. Binds to a receptor complex composed of either the high-affinity trimeric IL-2R (IL2RA/CD25, IL2RB/CD122 and IL2RG/CD132) or the low-affinity dimeric IL-2R (IL2RB and IL2RG). Interaction with the receptor leads to oligomerization and conformation changes in the IL-2R subunits resulting in downstream signaling starting with phosphorylation of JAK1 and JAK3. In turn, JAK1 and JAK3 phosphorylate the receptor to form a docking site leading to the phosphorylation of several substrates including STAT5. This process leads to activation of several pathways including STAT, phosphoinositide-3-kinase/PI3K and mitogen-activated protein kinase/MAPK pathways. Functions as a T-cell growth factor and can increase NK-cell cytolytic activity as well. Promotes strong proliferation of activated B-cells and subsequently immunoglobulin production. Plays a pivotal role in regulating the adaptive immune system by controlling the survival and proliferation of regulatory T-cells, which are required for the maintenance of immune tolerance. Moreover, participates in the differentiation and homeostasis of effector T-cell subsets, including Th1, Th2, Th17 as well as memory CD8-positive T-cells. This Orcinus orca (Killer whale) protein is Interleukin-2 (IL2).